The following is a 443-amino-acid chain: Probable glycine dehydrogenase (decarboxylating) subunit 1 (443 aa).

The protein belongs to the GcvP family. N-terminal subunit subfamily. In terms of assembly, the glycine cleavage system is composed of four proteins: P, T, L and H. In this organism, the P 'protein' is a heterodimer of two subunits.

It carries out the reaction N(6)-[(R)-lipoyl]-L-lysyl-[glycine-cleavage complex H protein] + glycine + H(+) = N(6)-[(R)-S(8)-aminomethyldihydrolipoyl]-L-lysyl-[glycine-cleavage complex H protein] + CO2. In terms of biological role, the glycine cleavage system catalyzes the degradation of glycine. The P protein binds the alpha-amino group of glycine through its pyridoxal phosphate cofactor; CO(2) is released and the remaining methylamine moiety is then transferred to the lipoamide cofactor of the H protein. The protein is Probable glycine dehydrogenase (decarboxylating) subunit 1 of Desulfovibrio desulfuricans (strain ATCC 27774 / DSM 6949 / MB).